The primary structure comprises 723 residues: Choline transporter-like protein 4 (723 aa).

The Cytoplasmic segment spans residues 1–36 (MGKKKQEEEQNSSEYGAPAQYDPTFNGPIHKRSCTD). Residues 37-57 (IICCVLFMLVITGYMVVGILA) form a helical membrane-spanning segment. The Extracellular segment spans residues 58 to 245 (WLYGDPRHVL…RIFEDFAKTW (188 aa)). Asn71, Asn202, Asn211, and Asn219 each carry an N-linked (GlcNAc...) asparagine glycan. Residues 246–266 (QWIVAGLVIAMVVSVLFLLLL) form a helical membrane-spanning segment. Over 267-269 (RFT) the chain is Cytoplasmic. Residues 270–290 (APVLIWILIFGVLAVGAFGIW) traverse the membrane as a helical segment. Topologically, residues 291 to 325 (YCYNDYMSLASSNLTFSNVGFTTNVQVYLQVRDTW) are extracellular. An N-linked (GlcNAc...) asparagine glycan is attached at Asn303. A helical membrane pass occupies residues 326–346 (LAFLIILCIVEAVLILALIFL). Residues 347–374 (RTRILIAIALIQETSKALGHMMSTLLYP) are Cytoplasmic-facing. The helical transmembrane segment at 375–395 (VVTFVLLLVCVSYWGITALYL) threads the bilayer. Residues 396–464 (ATSGAPIYKV…RNLFNLQIYN (69 aa)) lie on the Extracellular side of the membrane. N-linked (GlcNAc...) asparagine glycans are attached at residues Asn409, Asn421, and Asn430. Residues 465-485 (VVAFLWCVNFVIALGHCTLAG) traverse the membrane as a helical segment. Over 486-516 (AFASYYWAFSKPADIPTFPLTQSFMRALRYH) the chain is Cytoplasmic. The chain crosses the membrane as a helical span at residues 517-537 (VGSLAFGALILTLVQIVRIIL). Residues 538 to 578 (EYLDHKFKAAQNPCARFLMCCLKCCFWCLEKFIKFINRNAY) lie on the Extracellular side of the membrane. Residues 579 to 599 (IMIAIYGKNFCVSAKNAFFLL) traverse the membrane as a helical segment. Topologically, residues 600 to 615 (MRNIVRVVVLDKVTDL) are cytoplasmic. A helical transmembrane segment spans residues 616 to 636 (LLFFGKLLVVGGIGVLAFFFF). At 637 to 655 (SGRIQLPGNTFQTAALNYY) the chain is on the extracellular side. The chain crosses the membrane as a helical span at residues 656 to 676 (WMPIITVVFGAYLIAHGFFSV). Topologically, residues 677–723 (YNMGVDTLFLCFLEDLERNDGSAEKPYFMSKNLMKILNKKNKQPKTG) are cytoplasmic.

The protein belongs to the CTL (choline transporter-like) family.

The protein localises to the membrane. The protein resides in the apical cell membrane. The enzyme catalyses choline(out) + n H(+)(in) = choline(in) + n H(+)(out). The catalysed reaction is thiamine diphosphate(out) = thiamine diphosphate(in). In terms of biological role, choline transporter that seems to play a role in the choline-acetylcholine system and is required to the efferent innervation of hair cells in the olivocochlear bundle for the maintenance of physiological function of outer hair cells and the protection of hair cells from acoustic injury. Also described as a thiamine pyrophosphate transporter. The protein is Choline transporter-like protein 4 (slc44a4) of Danio rerio (Zebrafish).